The primary structure comprises 393 residues: Chorismate synthase (393 aa).

NADP(+) contacts are provided by arginine 40 and arginine 46. FMN-binding positions include 129 to 131, 249 to 250, glycine 301, 316 to 320, and arginine 342; these read RSS, QA, and KPIPT.

This sequence belongs to the chorismate synthase family. In terms of assembly, homotetramer. FMNH2 is required as a cofactor.

The catalysed reaction is 5-O-(1-carboxyvinyl)-3-phosphoshikimate = chorismate + phosphate. The protein operates within metabolic intermediate biosynthesis; chorismate biosynthesis; chorismate from D-erythrose 4-phosphate and phosphoenolpyruvate: step 7/7. Functionally, catalyzes the anti-1,4-elimination of the C-3 phosphate and the C-6 proR hydrogen from 5-enolpyruvylshikimate-3-phosphate (EPSP) to yield chorismate, which is the branch point compound that serves as the starting substrate for the three terminal pathways of aromatic amino acid biosynthesis. This reaction introduces a second double bond into the aromatic ring system. The sequence is that of Chorismate synthase from Geobacter sulfurreducens (strain ATCC 51573 / DSM 12127 / PCA).